The sequence spans 88 residues: Arminin 1a (88 aa).

The first 18 residues, 1–18 (MKTVLAFLFLPFIAFTHA), serve as a signal peptide directing secretion. Positions 19 to 57 (ESYEDVKEEIKNEAEKEIFEDLEEESDALDSSVREFNDA) are excised as a propeptide. Valine 85 carries the valine amide modification.

This sequence belongs to the arminin family. Expressed in entodermal epithelium along the body column.

The protein resides in the secreted. Its subcellular location is the target cell membrane. In terms of biological role, antimicrobial peptide with a broad-spectrum antimicrobial activity. Shows very strong bactericidal activity against B.megaterium (MBC=0.1 uM), E.coli (MBC=0.2 uM), S.aureus (MBC=0.4 uM), methicillin-resistant S.aureus (MRSA) (MBC=0.4-0.8 uM), vancomycin-resistant enterococci (VRE) (E.faecalis (MBC=1.6 uM), and E.faecium (MBC=0.4-0.8 uM)), and extended-spectrum beta-lactamase (ESBL)-producing enterobacteriaceae strains (K.pneumoniae (MBC=0.4-0.8 uM), E.coli (MBC=0.2-0.4 uM)). Keeps its antibacterial activity under a wide range of salt concentrations that mimic physiological conditions of human blood, which is surprising, since Hydra is an obligate freshwater animal with nearly no salt tolerance. Does not affect red blood cells. The polypeptide is Arminin 1a (Hydra vulgaris (Hydra)).